A 759-amino-acid polypeptide reads, in one-letter code: Protein YdeP (759 aa).

Positions 49 and 52 each coordinate [4Fe-4S] cluster.

The protein belongs to the prokaryotic molybdopterin-containing oxidoreductase family. It depends on [4Fe-4S] cluster as a cofactor. The cofactor is Mo-bis(molybdopterin guanine dinucleotide).

Its function is as follows. Probably involved in acid resistance. The protein is Protein YdeP (ydeP) of Shigella flexneri.